Consider the following 140-residue polypeptide: Nucleoside diphosphate kinase (140 aa).

K9, F57, R85, T91, R102, and N112 together coordinate ATP. H115 (pros-phosphohistidine intermediate) is an active-site residue.

It belongs to the NDK family. In terms of assembly, homotetramer. Mg(2+) serves as cofactor.

It localises to the cytoplasm. It catalyses the reaction a 2'-deoxyribonucleoside 5'-diphosphate + ATP = a 2'-deoxyribonucleoside 5'-triphosphate + ADP. The enzyme catalyses a ribonucleoside 5'-diphosphate + ATP = a ribonucleoside 5'-triphosphate + ADP. Its function is as follows. Major role in the synthesis of nucleoside triphosphates other than ATP. The ATP gamma phosphate is transferred to the NDP beta phosphate via a ping-pong mechanism, using a phosphorylated active-site intermediate. This Chlorobaculum tepidum (strain ATCC 49652 / DSM 12025 / NBRC 103806 / TLS) (Chlorobium tepidum) protein is Nucleoside diphosphate kinase.